The following is a 240-amino-acid chain: Adapter protein MecA (240 aa).

Belongs to the MecA family. In terms of assembly, homodimer.

In terms of biological role, enables the recognition and targeting of unfolded and aggregated proteins to the ClpC protease or to other proteins involved in proteolysis. The polypeptide is Adapter protein MecA (Streptococcus mutans serotype c (strain ATCC 700610 / UA159)).